The primary structure comprises 506 residues: Tabersonine 16-hydroxylase 1 (506 aa).

A helical membrane pass occupies residues 1–21 (MEFYYFLYLAFLLFCFILSKT). A heme-binding site is contributed by C447.

The protein belongs to the cytochrome P450 family. Requires heme as cofactor. As to expression, predominantly expressed in young leaves of mature plants. Low expression in roots and flowers, but not detected in stems and old leaves. Found predominantly in leaf epidermis. Barely detected in roots, internodes, young and mature leaves, and flower buds, but relatively abundant in fully developed flowers. Not detected in leaf epidermal cells.

The protein resides in the endoplasmic reticulum membrane. The enzyme catalyses (-)-tabersonine + reduced [NADPH--hemoprotein reductase] + O2 = 16-hydroxytabersonine + oxidized [NADPH--hemoprotein reductase] + H2O + H(+). The protein operates within alkaloid biosynthesis; vindoline biosynthesis. In terms of biological role, involved in the flower biosynthesis of vindoline, a precursor of vinblastine and vincristine. Hydroxylates specifically tabersonine, 2,3-dihydrotabersonine and 2,3-dihydro-3-hydroxytabersonine, but has no activity with naringenin, tryptamine, secologanin, strictosidine, ajmalicine, vindoline and catharanthine. The sequence is that of Tabersonine 16-hydroxylase 1 from Catharanthus roseus (Madagascar periwinkle).